We begin with the raw amino-acid sequence, 188 residues long: Josephin-2 (188 aa).

Residues Pro11–Asp188 form the Josephin domain. The Nucleophile role is filled by Cys24. The active-site Proton acceptor is His125.

It is found in the cytoplasm. The protein localises to the cytosol. The enzyme catalyses Thiol-dependent hydrolysis of ester, thioester, amide, peptide and isopeptide bonds formed by the C-terminal Gly of ubiquitin (a 76-residue protein attached to proteins as an intracellular targeting signal).. Cleaves 'Lys-63'-linked poly-ubiquitin chains, and with lesser efficiency 'Lys-48'-linked poly-ubiquitin chains (in vitro). May act as a deubiquitinating enzyme. The polypeptide is Josephin-2 (JOSD2) (Homo sapiens (Human)).